Reading from the N-terminus, the 417-residue chain is Cell division protein FtsA (417 aa).

This sequence belongs to the FtsA/MreB family. As to quaternary structure, self-interacts. Interacts with FtsZ.

Its subcellular location is the cell inner membrane. Its function is as follows. Cell division protein that is involved in the assembly of the Z ring. May serve as a membrane anchor for the Z ring. The chain is Cell division protein FtsA from Pseudomonas aeruginosa (strain ATCC 15692 / DSM 22644 / CIP 104116 / JCM 14847 / LMG 12228 / 1C / PRS 101 / PAO1).